The primary structure comprises 220 residues: Uracil-DNA glycosylase 1 (220 aa).

The active-site Proton acceptor is the Asp-65.

Belongs to the uracil-DNA glycosylase (UDG) superfamily. UNG family.

It localises to the cytoplasm. It carries out the reaction Hydrolyzes single-stranded DNA or mismatched double-stranded DNA and polynucleotides, releasing free uracil.. In terms of biological role, excises uracil residues from the DNA which can arise as a result of misincorporation of dUMP residues by DNA polymerase or due to deamination of cytosine. The sequence is that of Uracil-DNA glycosylase 1 from Bacteroides fragilis (strain YCH46).